We begin with the raw amino-acid sequence, 268 residues long: Phosphatidylglycerol--prolipoprotein diacylglyceryl transferase (268 aa).

7 helical membrane-spanning segments follow: residues 23-43, 62-82, 97-117, 132-152, 179-199, 206-226, and 241-261; these read IGLRWYGLMYLLGFVFARWLA, LLFNGFMGVFIGGRVGDVFFY, VWEGGMSFHGGLIGVIVAMIW, FVAPLIPFGLGLGRIGNFINL, SQLYEAFLEGLVLFAILNIFI, ASVAGLFLIGYGVFRFIVEYV, and GQALCLPMIIGGAFIMAWAYS. Arg-145 contacts a 1,2-diacyl-sn-glycero-3-phospho-(1'-sn-glycerol).

This sequence belongs to the Lgt family.

Its subcellular location is the cell inner membrane. It carries out the reaction L-cysteinyl-[prolipoprotein] + a 1,2-diacyl-sn-glycero-3-phospho-(1'-sn-glycerol) = an S-1,2-diacyl-sn-glyceryl-L-cysteinyl-[prolipoprotein] + sn-glycerol 1-phosphate + H(+). It participates in protein modification; lipoprotein biosynthesis (diacylglyceryl transfer). Catalyzes the transfer of the diacylglyceryl group from phosphatidylglycerol to the sulfhydryl group of the N-terminal cysteine of a prolipoprotein, the first step in the formation of mature lipoproteins. This chain is Phosphatidylglycerol--prolipoprotein diacylglyceryl transferase, found in Haemophilus influenzae (strain 86-028NP).